Consider the following 309-residue polypeptide: Probable 5-dehydro-4-deoxyglucarate dehydratase (309 aa).

The protein belongs to the DapA family.

The enzyme catalyses 5-dehydro-4-deoxy-D-glucarate + H(+) = 2,5-dioxopentanoate + CO2 + H2O. It functions in the pathway carbohydrate acid metabolism; D-glucarate degradation; 2,5-dioxopentanoate from D-glucarate: step 2/2. This Saccharopolyspora erythraea (strain ATCC 11635 / DSM 40517 / JCM 4748 / NBRC 13426 / NCIMB 8594 / NRRL 2338) protein is Probable 5-dehydro-4-deoxyglucarate dehydratase.